The sequence spans 566 residues: Proline--tRNA ligase 1 (566 aa).

This sequence belongs to the class-II aminoacyl-tRNA synthetase family. ProS type 1 subfamily. As to quaternary structure, homodimer.

Its subcellular location is the cytoplasm. The enzyme catalyses tRNA(Pro) + L-proline + ATP = L-prolyl-tRNA(Pro) + AMP + diphosphate. Its function is as follows. Catalyzes the attachment of proline to tRNA(Pro) in a two-step reaction: proline is first activated by ATP to form Pro-AMP and then transferred to the acceptor end of tRNA(Pro). As ProRS can inadvertently accommodate and process non-cognate amino acids such as alanine and cysteine, to avoid such errors it has two additional distinct editing activities against alanine. One activity is designated as 'pretransfer' editing and involves the tRNA(Pro)-independent hydrolysis of activated Ala-AMP. The other activity is designated 'posttransfer' editing and involves deacylation of mischarged Ala-tRNA(Pro). The misacylated Cys-tRNA(Pro) is not edited by ProRS. The protein is Proline--tRNA ligase 1 of Bacillus thuringiensis subsp. konkukian (strain 97-27).